A 284-amino-acid chain; its full sequence is Sulfotransferase 4A1 (284 aa).

Residues Thr8, Thr11, and Thr205 each carry the phosphothreonine modification.

Belongs to the sulfotransferase 1 family. Highly expressed in the cerebral cortex and frontal lobe, slightly less in the cerebellum, occipital and temporal lobes, relatively low in the medulla and putamen, and lowest in the spinal cord. No expression detected in the pancreas. Highly expressed in fetal brain and occipital lobe, slightly less in the whole brain, frontal lobe, hippocampus, and lung, very low expression in cerebellum, medulla oblongata, temporal lobe, testis, kidney and appendix.

Its subcellular location is the cytoplasm. Its function is as follows. Atypical sulfotransferase family member with very low affinity for 3'-phospho-5'-adenylyl sulfate (PAPS) and very low catalytic activity towards L-triiodothyronine, thyroxine, estrone, p-nitrophenol, 2-naphthylamine, and 2-beta-naphthol. May have a role in the metabolism of drugs and neurotransmitters in the CNS. The sequence is that of Sulfotransferase 4A1 (SULT4A1) from Homo sapiens (Human).